The primary structure comprises 315 residues: ATP synthase gamma chain (315 aa).

The protein belongs to the ATPase gamma chain family. As to quaternary structure, F-type ATPases have 2 components, CF(1) - the catalytic core - and CF(0) - the membrane proton channel. CF(1) has five subunits: alpha(3), beta(3), gamma(1), delta(1), epsilon(1). CF(0) has three main subunits: a, b and c.

The protein resides in the cellular thylakoid membrane. Its function is as follows. Produces ATP from ADP in the presence of a proton gradient across the membrane. The gamma chain is believed to be important in regulating ATPase activity and the flow of protons through the CF(0) complex. The sequence is that of ATP synthase gamma chain from Trichormus variabilis (strain ATCC 29413 / PCC 7937) (Anabaena variabilis).